Here is a 122-residue protein sequence, read N- to C-terminus: UPF0102 protein cgR_1859 (122 aa).

It belongs to the UPF0102 family.

This Corynebacterium glutamicum (strain R) protein is UPF0102 protein cgR_1859.